The sequence spans 669 residues: DNA ligase (669 aa).

NAD(+)-binding positions include Asp35–Asp39, Ser84–Leu85, and Glu116. Lys118 (N6-AMP-lysine intermediate) is an active-site residue. NAD(+) contacts are provided by Arg139, Glu176, Lys291, and Lys315. The Zn(2+) site is built by Cys409, Cys412, Cys427, and Cys432. One can recognise a BRCT domain in the interval Thr591–Ala669.

This sequence belongs to the NAD-dependent DNA ligase family. LigA subfamily. Mg(2+) is required as a cofactor. It depends on Mn(2+) as a cofactor.

It carries out the reaction NAD(+) + (deoxyribonucleotide)n-3'-hydroxyl + 5'-phospho-(deoxyribonucleotide)m = (deoxyribonucleotide)n+m + AMP + beta-nicotinamide D-nucleotide.. DNA ligase that catalyzes the formation of phosphodiester linkages between 5'-phosphoryl and 3'-hydroxyl groups in double-stranded DNA using NAD as a coenzyme and as the energy source for the reaction. It is essential for DNA replication and repair of damaged DNA. The protein is DNA ligase of Microcystis aeruginosa (strain NIES-843 / IAM M-2473).